Reading from the N-terminus, the 140-residue chain is Hemoglobin subunit alpha (140 aa).

The Globin domain maps to 1–140 (LSAADKGHVK…VSTVLTSKYR (140 aa)). S2 is subject to Phosphoserine. An N6-succinyllysine mark is found at K6 and K10. An N6-acetyllysine; alternate modification is found at K15. K15 carries the N6-succinyllysine; alternate modification. Y23 is subject to Phosphotyrosine. The residue at position 34 (S34) is a Phosphoserine. K39 carries the N6-succinyllysine modification. Residue S48 is modified to Phosphoserine. H57 contributes to the O2 binding site. H86 provides a ligand contact to heme b. S101 is modified (phosphoserine). T107 is subject to Phosphothreonine. The residue at position 123 (S123) is a Phosphoserine. Residues T133 and T136 each carry the phosphothreonine modification. At S137 the chain carries Phosphoserine.

It belongs to the globin family. In terms of assembly, heterotetramer of two alpha chains and two beta chains. As to expression, red blood cells.

Functionally, involved in oxygen transport from the lung to the various peripheral tissues. Hemopressin acts as an antagonist peptide of the cannabinoid receptor CNR1. Hemopressin-binding efficiently blocks cannabinoid receptor CNR1 and subsequent signaling. The polypeptide is Hemoglobin subunit alpha (HBA) (Tragelaphus strepsiceros (Greater kudu)).